Here is a 70-residue protein sequence, read N- to C-terminus: Gas vesicle protein A (70 aa).

This sequence belongs to the gas vesicle GvpA family. In terms of assembly, the gas vesicle shell is 2 nm thick and consists of a single layer of this protein. It forms helical ribs nearly perpendicular to the long axis of the vesicle.

Its subcellular location is the gas vesicle shell. In terms of biological role, gas vesicles are hollow, gas filled proteinaceous nanostructures found in some microorganisms. During planktonic growth they allow positioning of the organism at a favorable depth for light or nutrient acquisition. GvpA forms the protein shell. This is Gas vesicle protein A from Ancylobacter aquaticus.